The chain runs to 810 residues: Ecotropic viral integration site 5 protein homolog (810 aa).

Positions 1-483 (MVTNKMTAAF…EAESQCALKE (483 aa)) are interaction with alpha-tubulin, gamma-tubulin, BIRC5 and FBXO5. Disordered stretches follow at residues 49–80 (VASP…QLSP) and 98–123 (TDSK…SSSA). Positions 51–80 (SPSTSLHTTSSSTTLSTPALSPSSPSQLSP) are enriched in low complexity. Residues serine 102 and serine 113 each carry the phosphoserine modification. Over residues 103–123 (LRSVNGSRRNSGSSLVSSSSA) the composition is skewed to low complexity. The dimerization stretch occupies residues 128–693 (SHLEEDSWIL…LNKSDSNQYI (566 aa)). In terms of domain architecture, Rab-GAP TBC spans 163–348 (GIPHHFRAIV…RIFDIFMSEG (186 aa)). The targeting to the centrosomes stretch occupies residues 377–810 (QHFQKVIPHQ…RRRESYSTTV (434 aa)). A coiled-coil region spans residues 406–716 (KKMKKLEKEY…LRCLKGQRGF (311 aa)). Positions 487 to 810 (KVLDIEKRNN…RRRESYSTTV (324 aa)) are interaction with AURKB and INCENP. Residues serine 497, serine 689, serine 776, and serine 778 each carry the phosphoserine modification. The interval 756 to 810 (GFPLHGKSGSMSLDPAVADGSESETEDSVLETRESNQVVQKERPPRRRESYSTTV) is disordered. Residues 785–810 (LETRESNQVVQKERPPRRRESYSTTV) show a composition bias toward basic and acidic residues.

As to quaternary structure, dimeric and monomeric. Interacts with alpha- and gamma-tubulin. Interacts with FBXO5. Interacts with the chromosome passenger complex (CPC) which is at least composed of AURKB/aurora-B, BIRC5/survivin, CDCA8/borealin and INCENP. Probably phosphorylated by PLK1; may be required for degradation during mitosis. Post-translationally, ubiquitinated. Degradation during prophase is ubiquitin-dependent. In terms of tissue distribution, expressed in various cell lines (at protein level). Expressed in a wide range of tissues including brain and adrenal.

It is found in the nucleus. Its subcellular location is the cytoplasm. The protein resides in the cytoskeleton. It localises to the microtubule organizing center. The protein localises to the centrosome. It is found in the spindle. In terms of biological role, functions as a regulator of cell cycle progression by stabilizing the FBXO5 protein and promoting cyclin-A accumulation during interphase. May play a role in cytokinesis. The sequence is that of Ecotropic viral integration site 5 protein homolog (EVI5) from Homo sapiens (Human).